The following is a 171-amino-acid chain: Flavodoxin (171 aa).

The Flavodoxin-like domain occupies Ile4–Lys166.

Belongs to the flavodoxin family. FMN is required as a cofactor.

Functionally, low-potential electron donor to a number of redox enzymes. The chain is Flavodoxin (fld) from Trichodesmium erythraeum (strain IMS101).